The chain runs to 236 residues: Ribosomal RNA large subunit methyltransferase E (236 aa).

S-adenosyl-L-methionine contacts are provided by Gly-76, Trp-78, Asp-99, Asp-115, and Asp-140. The active-site Proton acceptor is the Lys-180.

It belongs to the class I-like SAM-binding methyltransferase superfamily. RNA methyltransferase RlmE family.

It is found in the cytoplasm. The catalysed reaction is uridine(2552) in 23S rRNA + S-adenosyl-L-methionine = 2'-O-methyluridine(2552) in 23S rRNA + S-adenosyl-L-homocysteine + H(+). Its function is as follows. Specifically methylates the uridine in position 2552 of 23S rRNA at the 2'-O position of the ribose in the fully assembled 50S ribosomal subunit. The polypeptide is Ribosomal RNA large subunit methyltransferase E (Rhodopseudomonas palustris (strain HaA2)).